Reading from the N-terminus, the 442-residue chain is Ribosomal protein uS12 methylthiotransferase RimO (442 aa).

Residues 8 to 118 (PKVGFVSLGC…VLGHVHKYVA (111 aa)) form the MTTase N-terminal domain. [4Fe-4S] cluster-binding residues include Cys-17, Cys-53, Cys-82, Cys-150, Cys-154, and Cys-157. The region spanning 136-373 (LTPRHYAYLK…MELQQQVSIR (238 aa)) is the Radical SAM core domain. Residues 376-442 (ARKVGKEMTV…EYDLWASLIG (67 aa)) enclose the TRAM domain.

Belongs to the methylthiotransferase family. RimO subfamily. [4Fe-4S] cluster is required as a cofactor.

The protein localises to the cytoplasm. The enzyme catalyses L-aspartate(89)-[ribosomal protein uS12]-hydrogen + (sulfur carrier)-SH + AH2 + 2 S-adenosyl-L-methionine = 3-methylsulfanyl-L-aspartate(89)-[ribosomal protein uS12]-hydrogen + (sulfur carrier)-H + 5'-deoxyadenosine + L-methionine + A + S-adenosyl-L-homocysteine + 2 H(+). Functionally, catalyzes the methylthiolation of an aspartic acid residue of ribosomal protein uS12. This chain is Ribosomal protein uS12 methylthiotransferase RimO, found in Aeromonas salmonicida (strain A449).